The sequence spans 567 residues: 25S rRNA (cytosine-C(5))-methyltransferase NSUN5 (567 aa).

Residues 1-17 show a composition bias toward basic residues; it reads MVARRNKPKAPLVKHRF. Residues 1-88 form a disordered region; the sequence is MVARRNKPKA…KTPPATKQKF (88 aa). S-adenosyl-L-methionine contacts are provided by residues 312–318, glutamate 336, aspartate 363, and aspartate 383; that span reads CSAPGNK. The active-site Nucleophile is the cysteine 444.

This sequence belongs to the class I-like SAM-binding methyltransferase superfamily. RsmB/NOP family.

The enzyme catalyses a cytidine in 25S rRNA + S-adenosyl-L-methionine = a 5-methylcytidine in 25S rRNA + S-adenosyl-L-homocysteine + H(+). Functionally, S-adenosyl-L-methionine-dependent methyltransferase that specifically methylates the C(5) position of cytosine 2268 (m5C2268) in 25S rRNA. In Arabidopsis thaliana (Mouse-ear cress), this protein is 25S rRNA (cytosine-C(5))-methyltransferase NSUN5.